A 395-amino-acid polypeptide reads, in one-letter code: uncharacterized protein (395 aa).

It belongs to the UDP-glycosyltransferase family.

This is an uncharacterized protein from Bacillus subtilis (strain 168).